The following is a 215-amino-acid chain: Extracellular small neutral protease (215 aa).

A signal peptide spans 1–30; the sequence is MRMTRAASALAGLGLAVAAALGSVAPASAA. Threonine 152 is a binding site for Ca(2+). Position 157 (histidine 157) interacts with Zn(2+). The active site involves glutamate 158. 2 residues coordinate Zn(2+): histidine 161 and aspartate 167. The cysteines at positions 173 and 186 are disulfide-linked.

The protein belongs to the peptidase M7 family. It depends on Zn(2+) as a cofactor.

It localises to the secreted. It carries out the reaction Hydrolyzes proteins with a preference for Tyr or Phe in the P1' position. Has no action on amino-acid p-nitroanilides.. In Streptomyces coelicolor, this protein is Extracellular small neutral protease (snpA).